The sequence spans 351 residues: N-formyl peptide receptor 2 (351 aa).

Topologically, residues 1-27 (METNFSTPLNEYEEVSYESAGYTVLRI) are extracellular. N-linked (GlcNAc...) asparagine glycosylation occurs at Asn-4. The chain crosses the membrane as a helical span at residues 28–50 (LPLVVLGVTFVLGVLGNGLVIWV). Residues 51 to 61 (AGFRMTRTVTT) lie on the Cytoplasmic side of the membrane. A helical transmembrane segment spans residues 62 to 83 (ICYLNLALADFSFTATLPFLIV). The Extracellular segment spans residues 84 to 100 (SMAMGEKWPFGWFLCKL). A disulfide bond links Cys-98 and Cys-176. A helical membrane pass occupies residues 101–121 (IHIVVDINLFGSVFLIGFIAL). The Cytoplasmic segment spans residues 122–140 (DRCICVLHPVWAQNHRTVS). A helical membrane pass occupies residues 141–162 (LAMKVIVGPWILALVLTLPVFL). Residues 163–205 (FLTTVTIPNGDTYCTFNFASWGGTPEERLKVAITMLTARGIIR) lie on the Extracellular side of the membrane. The chain crosses the membrane as a helical span at residues 206 to 226 (FVIGFSLPMSIVAICYGLIAA). The Cytoplasmic segment spans residues 227–242 (KIHKKGMIKSSRPLRV). The helical transmembrane segment at 243–266 (LTAVVASFFICWFPFQLVALLGTV) threads the bilayer. The Extracellular segment spans residues 267 to 286 (WLKEMLFYGKYKIIDILVNP). The helical transmembrane segment at 287–306 (TSSLAFFNSCLNPMLYVFVG) threads the bilayer. Residues 307 to 351 (QDFRERLIHSLPTSLERALSEDSAPTNDTAANSASPPAETELQAM) are Cytoplasmic-facing. The segment at 325–351 (LSEDSAPTNDTAANSASPPAETELQAM) is disordered. A compositionally biased stretch (polar residues) spans 329 to 341 (SAPTNDTAANSAS).

It belongs to the G-protein coupled receptor 1 family. As to quaternary structure, interacts with Amyloid-beta protein 42, product of APP; the interaction takes place at the cell surface and the complex is then rapidly internalized. In terms of assembly, (Microbial infection) Interacts with Staphylococcus aureus protein SSL13; this interaction leads to the activation of neutrophils. As to expression, detected in lung, bone marrow, neutrophils, spleen and testis.

Its subcellular location is the cell membrane. Its function is as follows. Low affinity receptor for N-formyl-methionyl peptides, which are powerful neutrophil chemotactic factors. Binding of FMLP to the receptor causes activation of neutrophils. This response is mediated via a G-protein that activates a phosphatidylinositol-calcium second messenger system. The activation of LXA4R could result in an anti-inflammatory outcome counteracting the actions of pro-inflammatory signals such as LTB4 (leukotriene B4). Receptor for the chemokine-like protein FAM19A5, mediating FAM19A5-stimulated macrophage chemotaxis and the inhibitory effect on TNFSF11/RANKL-induced osteoclast differentiation. Acts as a receptor for humanin. The sequence is that of N-formyl peptide receptor 2 (FPR2) from Homo sapiens (Human).